Reading from the N-terminus, the 436-residue chain is Phosphoribosylamine--glycine ligase (436 aa).

The 213-residue stretch at 106-318 folds into the ATP-grasp domain; that stretch reads RKLFEDYRIP…MLEICEGIVD (213 aa). Residue 133-196 coordinates ATP; the sequence is MEDFDSEAVV…EERVVGEEFT (64 aa). Gln-276, Glu-288, and Asn-290 together coordinate Mg(2+). Mn(2+) contacts are provided by Gln-276, Glu-288, and Asn-290.

Belongs to the GARS family. The cofactor is Mg(2+). Mn(2+) is required as a cofactor.

It catalyses the reaction 5-phospho-beta-D-ribosylamine + glycine + ATP = N(1)-(5-phospho-beta-D-ribosyl)glycinamide + ADP + phosphate + H(+). The protein operates within purine metabolism; IMP biosynthesis via de novo pathway; N(1)-(5-phospho-D-ribosyl)glycinamide from 5-phospho-alpha-D-ribose 1-diphosphate: step 2/2. This chain is Phosphoribosylamine--glycine ligase, found in Methanothermobacter thermautotrophicus (strain ATCC 29096 / DSM 1053 / JCM 10044 / NBRC 100330 / Delta H) (Methanobacterium thermoautotrophicum).